A 296-amino-acid polypeptide reads, in one-letter code: tRNA uridine(34) hydroxylase (296 aa).

Positions A121–S215 constitute a Rhodanese domain. Catalysis depends on C175, which acts as the Cysteine persulfide intermediate.

Belongs to the TrhO family.

The enzyme catalyses uridine(34) in tRNA + AH2 + O2 = 5-hydroxyuridine(34) in tRNA + A + H2O. Functionally, catalyzes oxygen-dependent 5-hydroxyuridine (ho5U) modification at position 34 in tRNAs. This is tRNA uridine(34) hydroxylase from Roseobacter denitrificans (strain ATCC 33942 / OCh 114) (Erythrobacter sp. (strain OCh 114)).